A 111-amino-acid polypeptide reads, in one-letter code: Resistin-like alpha (111 aa).

The first 23 residues, 1-23 (MKTTTCSLLICISLLQLMVPVNT), serve as a signal peptide directing secretion. Disulfide bonds link C55-C108, C67-C107, C76-C93, C78-C95, and C82-C97.

It belongs to the resistin/FIZZ family. As to quaternary structure, monomer. Highest levels in adipose tissue.

The protein localises to the secreted. Its function is as follows. Probable hormone. Plays a role in pulmonary vascular remodeling. The chain is Resistin-like alpha (Retnla) from Mus musculus (Mouse).